A 1108-amino-acid polypeptide reads, in one-letter code: Lon protease homolog, mitochondrial (1108 aa).

Residues 1–62 (MLRGQSLPWR…RAFSTSSIRR (62 aa)) constitute a mitochondrion transit peptide. Disordered regions lie at residues 24 to 192 (PLLP…QKPS) and 299 to 318 (LPPGEQSKAGNTEDKAPEKK). A compositionally biased stretch (low complexity) spans 36 to 53 (RSNLSISRLSRSPSLSPR). Composition is skewed to basic and acidic residues over residues 78-103 (EQKDPNEQKDSDRSPEGRRRSPDSTG) and 119-146 (KVAGEKEQRGVEEDAKKENVSIEGKSDP). Over residues 161 to 171 (SDTKSSASNGG) the composition is skewed to polar residues. 2 stretches are compositionally biased toward basic and acidic residues: residues 174–188 (DGGRKGKKGSGDRAL) and 309–318 (NTEDKAPEKK). Residues 200–452 (VMAIPIAKRP…KALVVLKKEL (253 aa)) form the Lon N-terminal domain. Residue 605 to 612 (GPPGVGKT) coordinates ATP. Residues 821-855 (DKALTDEGKAAQEESKKETEEGDPKDPPADPEKST) show a composition bias toward basic and acidic residues. Residues 821 to 862 (DKALTDEGKAAQEESKKETEEGDPKDPPADPEKSTTETPRLA) are disordered. The Lon proteolytic domain maps to 895-1081 (TFPPGVTMGL…SEVFNILFAE (187 aa)). Catalysis depends on residues Ser-987 and Lys-1030.

Belongs to the peptidase S16 family. As to quaternary structure, homohexamer or homoheptamer. Organized in a ring with a central cavity.

It localises to the mitochondrion matrix. It catalyses the reaction Hydrolysis of proteins in presence of ATP.. In terms of biological role, ATP-dependent serine protease that mediates the selective degradation of misfolded, unassembled or oxidatively damaged polypeptides as well as certain short-lived regulatory proteins in the mitochondrial matrix. May also have a chaperone function in the assembly of inner membrane protein complexes. Participates in the regulation of mitochondrial gene expression and in the maintenance of the integrity of the mitochondrial genome. Binds to mitochondrial DNA in a site-specific manner. This is Lon protease homolog, mitochondrial (pim1) from Aspergillus fumigatus (strain ATCC MYA-4609 / CBS 101355 / FGSC A1100 / Af293) (Neosartorya fumigata).